Reading from the N-terminus, the 97-residue chain is Co-chaperonin GroES (97 aa).

It belongs to the GroES chaperonin family. As to quaternary structure, heptamer of 7 subunits arranged in a ring. Interacts with the chaperonin GroEL.

Its subcellular location is the cytoplasm. Together with the chaperonin GroEL, plays an essential role in assisting protein folding. The GroEL-GroES system forms a nano-cage that allows encapsulation of the non-native substrate proteins and provides a physical environment optimized to promote and accelerate protein folding. GroES binds to the apical surface of the GroEL ring, thereby capping the opening of the GroEL channel. The sequence is that of Co-chaperonin GroES from Yersinia pseudotuberculosis serotype O:1b (strain IP 31758).